A 309-amino-acid polypeptide reads, in one-letter code: MKRKNFTEVSEFIFLGFSSFGKHQITLFVVFLTVYILTLVANIIIVTIICIDHHLHTPMYFFLSMLASSETVYTLVIVPRMLLSLIFHNQPISLAGCATQMFFFVILATNNCFLLTAMGYDRYVAICRPLRYTVIMSKGLCAQLVCGSFGIGLTMAVLHVTAMFNLPFCGTVVDHFFCDIYPVMKLSCIDTTINEIINYGVSSFVIFVPIGLIFISYVLVISSILQIASAEGRKKTFATCVSHLTVVIVHCGCASIAYLKPKSESSIEKDLVLSVTYTIITPLLNPVVYSLRNKEVKDALCRVVGRNIS.

Residues 1–25 (MKRKNFTEVSEFIFLGFSSFGKHQI) lie on the Extracellular side of the membrane. An N-linked (GlcNAc...) asparagine glycan is attached at Asn-5. A helical membrane pass occupies residues 26-46 (TLFVVFLTVYILTLVANIIIV). Residues 47-54 (TIICIDHH) are Cytoplasmic-facing. Residues 55-75 (LHTPMYFFLSMLASSETVYTL) traverse the membrane as a helical segment. Residues 76–99 (VIVPRMLLSLIFHNQPISLAGCAT) are Extracellular-facing. Cysteines 97 and 188 form a disulfide. A helical membrane pass occupies residues 100-120 (QMFFFVILATNNCFLLTAMGY). Topologically, residues 121 to 139 (DRYVAICRPLRYTVIMSKG) are cytoplasmic. Residues 140–160 (LCAQLVCGSFGIGLTMAVLHV) form a helical membrane-spanning segment. Residues 161 to 196 (TAMFNLPFCGTVVDHFFCDIYPVMKLSCIDTTINEI) lie on the Extracellular side of the membrane. Residues 197–216 (INYGVSSFVIFVPIGLIFIS) traverse the membrane as a helical segment. Residues 217–236 (YVLVISSILQIASAEGRKKT) are Cytoplasmic-facing. A helical membrane pass occupies residues 237–257 (FATCVSHLTVVIVHCGCASIA). At 258–270 (YLKPKSESSIEKD) the chain is on the extracellular side. The helical transmembrane segment at 271 to 291 (LVLSVTYTIITPLLNPVVYSL) threads the bilayer. Residues 292 to 309 (RNKEVKDALCRVVGRNIS) lie on the Cytoplasmic side of the membrane.

The protein belongs to the G-protein coupled receptor 1 family. Expressed in both the aorta, the coronary artery and umbilical vein endothelial cells (HUVECs) (at protein level).

The protein localises to the cell membrane. In terms of biological role, olfactory receptor. Activated by the synthetic floral odorant, lyral, and by alpha-cedrene, a sesquiterpene constituent of cedarwood oil. Its activation increases intracellular Ca(2+). Acts as a key regulator of myogenesis through its actions on cell migration and adhesion by activating the Ca(2+)-dependent AKT signal transduction pathway. Also acts as a regulator of angiogenesis. Moreover, plays a role in the regulation of lipid accumulation in hepatocytes via the cAMP-PKA pathway. May be involved in sperm chemotaxis and motility. In Homo sapiens (Human), this protein is Olfactory receptor 10J5.